A 445-amino-acid polypeptide reads, in one-letter code: Methionine aminopeptidase 2-1 (445 aa).

The segment at 1–86 (MAAQASEDLQ…VQSEPPRVPL (86 aa)) is disordered. Residues 34 to 46 (GEAEDDSDDDADE) show a composition bias toward acidic residues. Residues 59-74 (AKKKKKRKSKKKKKGG) show a composition bias toward basic residues. Substrate is bound at residue histidine 198. Residues aspartate 218, aspartate 229, and histidine 298 each contribute to the a divalent metal cation site. Residue histidine 306 participates in substrate binding. Residues glutamate 331 and glutamate 426 each coordinate a divalent metal cation.

It belongs to the peptidase M24A family. Methionine aminopeptidase eukaryotic type 2 subfamily. It depends on Co(2+) as a cofactor. Zn(2+) serves as cofactor. Mn(2+) is required as a cofactor. The cofactor is Fe(2+).

Its subcellular location is the cytoplasm. It catalyses the reaction Release of N-terminal amino acids, preferentially methionine, from peptides and arylamides.. In terms of biological role, cotranslationally removes the N-terminal methionine from nascent proteins. The N-terminal methionine is often cleaved when the second residue in the primary sequence is small and uncharged (Met-Ala-, Cys, Gly, Pro, Ser, Thr, or Val). This is Methionine aminopeptidase 2-1 from Aspergillus flavus (strain ATCC 200026 / FGSC A1120 / IAM 13836 / NRRL 3357 / JCM 12722 / SRRC 167).